Here is a 491-residue protein sequence, read N- to C-terminus: Probable glycine dehydrogenase (decarboxylating) subunit 2 (491 aa).

Lysine 264 is subject to N6-(pyridoxal phosphate)lysine.

It belongs to the GcvP family. C-terminal subunit subfamily. The glycine cleavage system is composed of four proteins: P, T, L and H. In this organism, the P 'protein' is a heterodimer of two subunits. Requires pyridoxal 5'-phosphate as cofactor.

It carries out the reaction N(6)-[(R)-lipoyl]-L-lysyl-[glycine-cleavage complex H protein] + glycine + H(+) = N(6)-[(R)-S(8)-aminomethyldihydrolipoyl]-L-lysyl-[glycine-cleavage complex H protein] + CO2. Its function is as follows. The glycine cleavage system catalyzes the degradation of glycine. The P protein binds the alpha-amino group of glycine through its pyridoxal phosphate cofactor; CO(2) is released and the remaining methylamine moiety is then transferred to the lipoamide cofactor of the H protein. The protein is Probable glycine dehydrogenase (decarboxylating) subunit 2 of Coxiella burnetii (strain Dugway 5J108-111).